A 427-amino-acid polypeptide reads, in one-letter code: Serine--tRNA ligase (427 aa).

231–233 (TAE) is a binding site for L-serine. Residue 262 to 264 (RSE) coordinates ATP. L-serine is bound at residue Glu285. An ATP-binding site is contributed by 349–352 (EISS). Ser385 is a binding site for L-serine.

This sequence belongs to the class-II aminoacyl-tRNA synthetase family. Type-1 seryl-tRNA synthetase subfamily. Homodimer. The tRNA molecule binds across the dimer.

The protein resides in the cytoplasm. It carries out the reaction tRNA(Ser) + L-serine + ATP = L-seryl-tRNA(Ser) + AMP + diphosphate + H(+). The catalysed reaction is tRNA(Sec) + L-serine + ATP = L-seryl-tRNA(Sec) + AMP + diphosphate + H(+). It participates in aminoacyl-tRNA biosynthesis; selenocysteinyl-tRNA(Sec) biosynthesis; L-seryl-tRNA(Sec) from L-serine and tRNA(Sec): step 1/1. Catalyzes the attachment of serine to tRNA(Ser). Is also able to aminoacylate tRNA(Sec) with serine, to form the misacylated tRNA L-seryl-tRNA(Sec), which will be further converted into selenocysteinyl-tRNA(Sec). In Exiguobacterium sp. (strain ATCC BAA-1283 / AT1b), this protein is Serine--tRNA ligase.